The chain runs to 87 residues: Translation initiation factor IF-1 1 (87 aa).

The S1-like domain occupies 1 to 72; that stretch reads MAKEELLELD…TKGRINFRHK (72 aa). The disordered stretch occupies residues 68–87; the sequence is NFRHKDANSPRPPRTGQPRR. The segment covering 77–87 has biased composition (pro residues); the sequence is PRPPRTGQPRR.

The protein belongs to the IF-1 family. As to quaternary structure, component of the 30S ribosomal translation pre-initiation complex which assembles on the 30S ribosome in the order IF-2 and IF-3, IF-1 and N-formylmethionyl-tRNA(fMet); mRNA recruitment can occur at any time during PIC assembly.

Its subcellular location is the cytoplasm. Its function is as follows. One of the essential components for the initiation of protein synthesis. Stabilizes the binding of IF-2 and IF-3 on the 30S subunit to which N-formylmethionyl-tRNA(fMet) subsequently binds. Helps modulate mRNA selection, yielding the 30S pre-initiation complex (PIC). Upon addition of the 50S ribosomal subunit IF-1, IF-2 and IF-3 are released leaving the mature 70S translation initiation complex. The polypeptide is Translation initiation factor IF-1 1 (Burkholderia lata (strain ATCC 17760 / DSM 23089 / LMG 22485 / NCIMB 9086 / R18194 / 383)).